A 157-amino-acid chain; its full sequence is uncharacterized protein (157 aa).

Positions 1 to 26 (MEALRRAHEVALRLLLCRPWASRAAA) are cleaved as a signal peptide.

It is found in the secreted. This is an uncharacterized protein from Homo sapiens (Human).